The following is a 343-amino-acid chain: 3-dehydroquinate synthase (343 aa).

Residues serine 61–lysine 66, glycine 95–aspartate 99, threonine 119–threonine 120, lysine 132, lysine 141, and phenylalanine 159–threonine 162 contribute to the NAD(+) site. Residues glutamate 174, histidine 231, and histidine 248 each contribute to the Zn(2+) site.

The protein belongs to the sugar phosphate cyclases superfamily. Dehydroquinate synthase family. NAD(+) is required as a cofactor. The cofactor is Co(2+). Zn(2+) serves as cofactor.

It is found in the cytoplasm. The enzyme catalyses 7-phospho-2-dehydro-3-deoxy-D-arabino-heptonate = 3-dehydroquinate + phosphate. The protein operates within metabolic intermediate biosynthesis; chorismate biosynthesis; chorismate from D-erythrose 4-phosphate and phosphoenolpyruvate: step 2/7. Its function is as follows. Catalyzes the conversion of 3-deoxy-D-arabino-heptulosonate 7-phosphate (DAHP) to dehydroquinate (DHQ). The sequence is that of 3-dehydroquinate synthase from Helicobacter pylori (strain J99 / ATCC 700824) (Campylobacter pylori J99).